A 624-amino-acid chain; its full sequence is Threonine--tRNA ligase (624 aa).

An editing domain region spans residues 1-143; it reads MRLLFIHADE…SRTVTPEAAE (143 aa). Residues 197 to 499 are catalytic; sequence AHVKLMREKE…EQEGKLPTLP (303 aa). Zn(2+) contacts are provided by Cys289, His340, and His467. A disordered region spans residues 598–624; it reads LERETEGKPRVPLTIPDRLSRRPRFGR.

The protein belongs to the class-II aminoacyl-tRNA synthetase family. In terms of assembly, homodimer. It depends on Zn(2+) as a cofactor.

It is found in the cytoplasm. The enzyme catalyses tRNA(Thr) + L-threonine + ATP = L-threonyl-tRNA(Thr) + AMP + diphosphate + H(+). Its function is as follows. Catalyzes the attachment of threonine to tRNA(Thr) in a two-step reaction: L-threonine is first activated by ATP to form Thr-AMP and then transferred to the acceptor end of tRNA(Thr). Also edits incorrectly charged L-seryl-tRNA(Thr). In Methanopyrus kandleri (strain AV19 / DSM 6324 / JCM 9639 / NBRC 100938), this protein is Threonine--tRNA ligase.